The sequence spans 524 residues: Bifunctional NAD(P)H-hydrate repair enzyme Nnr (524 aa).

Residues 1-219 are NAD(P)H-hydrate epimerase; it reads MKVARVSEIK…ISYPRALLED (219 aa). Residues 9–218 form the YjeF N-terminal domain; it reads IKLLDREAAE…HISYPRALLE (210 aa). Residues 57–61 form an NADPHX 1; for epimerase activity region; that stretch reads NNGGD. Positions 58 and 128 each coordinate K(+). Residues 132 to 138 form an NADPHX 1; for epimerase activity region; it reads GTGLSRP. (6S)-NADPHX is bound by residues tyrosine 143 and aspartate 161. Serine 164 is a binding site for K(+). Positions 224–507 constitute a YjeF C-terminal domain; the sequence is VETNDPVPLP…NYLPKALRAL (284 aa). Positions 224–524 are ADP-dependent (S)-NAD(P)H-hydrate dehydratase; it reads VETNDPVPLP…LERYTIKVLP (301 aa). Glycine 330 contributes to the (6S)-NADPHX binding site. The NADPHX 2; for dehydratase activity stretch occupies residues 381 to 387; sequence HAGEMSR. ADP-binding positions include 418-422 and 438-447; these read KGAHT and NPGMATAGSG. Position 448 (aspartate 448) interacts with (6S)-NADPHX.

In the N-terminal section; belongs to the NnrE/AIBP family. It in the C-terminal section; belongs to the NnrD/CARKD family. K(+) is required as a cofactor.

It catalyses the reaction (6S)-NADHX + ADP = AMP + phosphate + NADH + H(+). The catalysed reaction is (6S)-NADPHX + ADP = AMP + phosphate + NADPH + H(+). It carries out the reaction (6R)-NADHX = (6S)-NADHX. The enzyme catalyses (6R)-NADPHX = (6S)-NADPHX. Functionally, bifunctional enzyme that catalyzes the epimerization of the S- and R-forms of NAD(P)HX and the dehydration of the S-form of NAD(P)HX at the expense of ADP, which is converted to AMP. This allows the repair of both epimers of NAD(P)HX, a damaged form of NAD(P)H that is a result of enzymatic or heat-dependent hydration. This chain is Bifunctional NAD(P)H-hydrate repair enzyme Nnr (nnr), found in Thermofilum pendens (strain DSM 2475 / Hrk 5).